The following is a 1571-amino-acid chain: Paternally-expressed gene 3 protein (1571 aa).

Disordered regions lie at residues 1 to 120 (MYHH…NPIQ) and 137 to 241 (AEDD…QERG). Composition is skewed to basic and acidic residues over residues 35 to 56 (GSER…DRWP), 80 to 99 (FGLD…RSQD), 169 to 186 (PEAK…DESS), 193 to 215 (KFIK…ERPP), and 223 to 241 (DNWK…QERG). The segment at 199 to 265 (ARNPKSGRAR…DLASRSRALE (67 aa)) is 10 X 5 AA repeat of P-H-X-X-E. The interval 199–265 (ARNPKSGRAR…DLASRSRALE (67 aa)) is 3 X 5 AA repeat of P-H-D-D-K. 4 C2H2-type zinc fingers span residues 325 to 347 (YVCD…QIMH), 378 to 400 (FECK…RQIH), 436 to 458 (YECK…QKIH), and 520 to 542 (YECK…QKIH). Positions 456–495 (KIHGRGNSDDRDNERERERDRLRARAREQRERERERERER) are disordered. Disordered regions lie at residues 585-649 (ALMG…LKFP), 672-713 (EAQK…TYEG), and 764-820 (REDA…AKKK). Residues 592 to 614 (SSEHQKNRSRRNFFEGRGFEKPF) are compositionally biased toward basic and acidic residues. 2 stretches are compositionally biased toward polar residues: residues 770–781 (GSSSSNYHTPNV) and 799–808 (DVTFSVPSSS). Positions 809-820 (VREHQKARAKKK) are enriched in basic and acidic residues. The segment at 850 to 872 (FECQECGEAFARRSELIEHQKIH) adopts a C2H2-type 5 zinc-finger fold. A disordered region spans residues 937–1070 (FNAEEPHDKE…ESHGQEKVED (134 aa)). Residues 940–1070 (EEPHDKETHG…ESHGQEKVED (131 aa)) are compositionally biased toward basic and acidic residues. Repeat copies occupy residues 942 to 946 (PHDKE), 967 to 971 (PHGDE), 987 to 991 (PHDDK), 992 to 996 (PHGQE), 997 to 1001 (PHDDK), 1002 to 1006 (PHGQE), 1007 to 1011 (PHDDK), 1012 to 1016 (PHGQE), 1017 to 1021 (PHGDE), 1022 to 1026 (PHGQE), 1027 to 1031 (PHGDE), 1032 to 1036 (PHDKE), and 1047 to 1051 (PHSEE). 4 C2H2-type zinc fingers span residues 1091-1113 (YECQ…QDTH), 1147-1169 (YECP…QRVH), 1209-1231 (IRCR…MRQH), and 1266-1289 (FECT…TKVH). The segment at 1317-1339 (YECKDCGQSFLDDTVIAERMVFH) adopts a C2H2-type 10; degenerate zinc-finger fold. Positions 1373–1487 (NAEAAEPEVE…DQEIEVEEPY (115 aa)) are disordered. Acidic residues-rich tracts occupy residues 1377-1397 (AEPE…EVEA), 1405-1418 (EGPD…DGEA), and 1431-1485 (DADE…EVEE). C2H2-type zinc fingers lie at residues 1488–1510 (YNCH…LKSH) and 1547–1569 (FKCD…QNSH).

The protein belongs to the krueppel C2H2-type zinc-finger protein family. As to quaternary structure, homodimer. Interacts with SIAH1A and SIAH2. Interacts with TRAF2. As to expression, brain, glial cells, neurons, skeletal muscle, uterus and placenta. In the placenta it is found in all trophoblast cells.

Its subcellular location is the nucleus. It is found in the cytoplasm. Functionally, induces apoptosis in cooperation with SIAH1A. Acts as a mediator between p53/TP53 and BAX in a neuronal death pathway that is activated by DNA damage. Acts synergistically with TRAF2 and inhibits TNF induced apoptosis through activation of NF-kappa-B. Plays a role in regulating maternal behavior and offspring growth. In Mus musculus (Mouse), this protein is Paternally-expressed gene 3 protein (Peg3).